Here is a 225-residue protein sequence, read N- to C-terminus: UPF0758 protein Sden_0326 (225 aa).

One can recognise an MPN domain in the interval 102–224; it reads ILTNPDLTRD…IVSFAERGWL (123 aa). Zn(2+) contacts are provided by H173, H175, and D186. The JAMM motif motif lies at 173–186; it reads HNHPSGIAEPSQAD.

It belongs to the UPF0758 family.

This is UPF0758 protein Sden_0326 from Shewanella denitrificans (strain OS217 / ATCC BAA-1090 / DSM 15013).